The following is a 159-amino-acid chain: U1 small nuclear ribonucleoprotein C (159 aa).

The segment at 4 to 36 adopts a Matrin-type zinc-finger fold; sequence FYCDYCDTYLTHDSPSVRKTHCSGRKHKENVKD. A Phosphotyrosine modification is found at Tyr8. Ser17 is modified (phosphoserine). At Lys52 the chain carries N6-acetyllysine. Disordered stretches follow at residues 62–96 and 140–159; these read IPPTPFSAPPPAGAMIPPPPSLPGPPRPGMMPAPH and RPPARPMMVPTRPGMTRPDR. A compositionally biased stretch (pro residues) spans 63 to 92; that stretch reads PPTPFSAPPPAGAMIPPPPSLPGPPRPGMM.

This sequence belongs to the U1 small nuclear ribonucleoprotein C family. As to quaternary structure, component of the U1 snRNP. The U1 snRNP is composed of the U1 snRNA and the 7 core Sm proteins SNRPB, SNRPD1, SNRPD2, SNRPD3, SNRPE, SNRPF and SNRPG that assemble in a heptameric protein ring on the Sm site of the small nuclear RNA to form the core snRNP, and at least 3 U1 snRNP-specific proteins SNRNP70/U1-70K, SNRPA/U1-A and SNRPC/U1-C. SNRPC/U1-C interacts with U1 snRNA and the 5' splice-site region of the pre-mRNA. Interacts (via N-terminus) with TIA1 (via C-terminus); thereby promoting spliceosomal U1 snRNP recruitment to 5' splice sites.

It is found in the nucleus. In terms of biological role, component of the spliceosomal U1 snRNP, which is essential for recognition of the pre-mRNA 5' splice-site and the subsequent assembly of the spliceosome. SNRPC/U1-C is directly involved in initial 5' splice-site recognition for both constitutive and regulated alternative splicing. The interaction with the 5' splice-site seems to precede base-pairing between the pre-mRNA and the U1 snRNA. Stimulates commitment or early (E) complex formation by stabilizing the base pairing of the 5' end of the U1 snRNA and the 5' splice-site region. This chain is U1 small nuclear ribonucleoprotein C, found in Homo sapiens (Human).